The following is a 334-amino-acid chain: Phosphoribosylformylglycinamidine cyclo-ligase (334 aa).

Belongs to the AIR synthase family.

The protein localises to the cytoplasm. The enzyme catalyses 2-formamido-N(1)-(5-O-phospho-beta-D-ribosyl)acetamidine + ATP = 5-amino-1-(5-phospho-beta-D-ribosyl)imidazole + ADP + phosphate + H(+). It functions in the pathway purine metabolism; IMP biosynthesis via de novo pathway; 5-amino-1-(5-phospho-D-ribosyl)imidazole from N(2)-formyl-N(1)-(5-phospho-D-ribosyl)glycinamide: step 2/2. The protein is Phosphoribosylformylglycinamidine cyclo-ligase of Pyrococcus horikoshii (strain ATCC 700860 / DSM 12428 / JCM 9974 / NBRC 100139 / OT-3).